The following is a 317-amino-acid chain: Acetyl-coenzyme A carboxylase carboxyl transferase subunit alpha (317 aa).

The region spanning 40–293 (LEVRVREAIV…GDVIASALAE (254 aa)) is the CoA carboxyltransferase C-terminal domain.

The protein belongs to the AccA family. Acetyl-CoA carboxylase is a heterohexamer composed of biotin carboxyl carrier protein (AccB), biotin carboxylase (AccC) and two subunits each of ACCase subunit alpha (AccA) and ACCase subunit beta (AccD).

It localises to the cytoplasm. It catalyses the reaction N(6)-carboxybiotinyl-L-lysyl-[protein] + acetyl-CoA = N(6)-biotinyl-L-lysyl-[protein] + malonyl-CoA. It functions in the pathway lipid metabolism; malonyl-CoA biosynthesis; malonyl-CoA from acetyl-CoA: step 1/1. Functionally, component of the acetyl coenzyme A carboxylase (ACC) complex. First, biotin carboxylase catalyzes the carboxylation of biotin on its carrier protein (BCCP) and then the CO(2) group is transferred by the carboxyltransferase to acetyl-CoA to form malonyl-CoA. The chain is Acetyl-coenzyme A carboxylase carboxyl transferase subunit alpha from Rhizobium johnstonii (strain DSM 114642 / LMG 32736 / 3841) (Rhizobium leguminosarum bv. viciae).